The following is a 589-amino-acid chain: MLPEPVSCPDWLIAQEAEKRMKSIFQLAEELDIKKEELIPYGSYIAKIDYRKLYSRIKNNPNGKYIIVTAITPTPFGEGKSTTTIGLTQGLGKRGKKVSCAIRQPSAGPLMNIKGSAAGGGLSQCIPRTEFSLGFTGDINAVMNAHNLAMVALTSRMLHEANYSDEILKKRGLRRLDIDPKRVQMGWVIDFCVQALRKIVIGLGGKKDGITMESRFDIATSSELMAILSLVKDLKELKKRISSIVVAYSKTGNPITTEDLEVSGAMSALMLPAFNPNLIQTIEGQPVFVHAAPFANIAIGQSSIIADMVGLKLNEYHVTECGFGADIGFEKFWNIKCRTSGLKPDVAVLVATLRALKYHGADKDSPKIIPGNPLPKEYIEKNMQWLERGMKNLFHHIKIIKKSGLSIVVCINKFQSDTHEELDFVRKFCEEMGIPVAISEHWQKGGQGALELADFVIDACKNNSNFNFLYENSLPHISRIELIAREIYGADSVEFSPLALEKLQSINSKKEFSDFAICIAKTHLSLSDNPLLRGVPEGWQLFIRDILVFYGAKLIVPVAGEISLMPGTASTPNFRTIDVDLQTGKVTGI.

Residue 74 to 81 (TPFGEGKS) participates in ATP binding.

The protein belongs to the formate--tetrahydrofolate ligase family.

It catalyses the reaction (6S)-5,6,7,8-tetrahydrofolate + formate + ATP = (6R)-10-formyltetrahydrofolate + ADP + phosphate. It participates in one-carbon metabolism; tetrahydrofolate interconversion. This chain is Formate--tetrahydrofolate ligase, found in Thermodesulfovibrio yellowstonii (strain ATCC 51303 / DSM 11347 / YP87).